A 137-amino-acid polypeptide reads, in one-letter code: Nucleoside diphosphate kinase (137 aa).

ATP is bound by residues lysine 10, phenylalanine 58, arginine 86, threonine 92, arginine 103, and asparagine 113. The active-site Pros-phosphohistidine intermediate is histidine 116.

The protein belongs to the NDK family. In terms of assembly, homotetramer. Mg(2+) serves as cofactor.

It localises to the cytoplasm. The enzyme catalyses a 2'-deoxyribonucleoside 5'-diphosphate + ATP = a 2'-deoxyribonucleoside 5'-triphosphate + ADP. The catalysed reaction is a ribonucleoside 5'-diphosphate + ATP = a ribonucleoside 5'-triphosphate + ADP. Major role in the synthesis of nucleoside triphosphates other than ATP. The ATP gamma phosphate is transferred to the NDP beta phosphate via a ping-pong mechanism, using a phosphorylated active-site intermediate. This is Nucleoside diphosphate kinase from Helicobacter acinonychis (strain Sheeba).